The sequence spans 593 residues: Adenine deaminase 2 (593 aa).

Belongs to the metallo-dependent hydrolases superfamily. Adenine deaminase family. Mn(2+) serves as cofactor.

The catalysed reaction is adenine + H2O + H(+) = hypoxanthine + NH4(+). This is Adenine deaminase 2 from Rhizobium meliloti (strain 1021) (Ensifer meliloti).